A 796-amino-acid chain; its full sequence is Protein translocase subunit SecA 2 (796 aa).

Residues Gln84, 102–106, and Asp496 contribute to the ATP site; that span reads GEGKT.

Belongs to the SecA family. As to quaternary structure, monomer and homodimer. Part of the essential Sec protein translocation apparatus which comprises SecA, SecYEG and auxiliary proteins SecDF. Other proteins may also be involved.

The protein resides in the cell membrane. The protein localises to the cytoplasm. The enzyme catalyses ATP + H2O + cellular proteinSide 1 = ADP + phosphate + cellular proteinSide 2.. Functionally, part of the Sec protein translocase complex. Interacts with the SecYEG preprotein conducting channel. Has a central role in coupling the hydrolysis of ATP to the transfer of proteins into and across the cell membrane, serving as an ATP-driven molecular motor driving the stepwise translocation of polypeptide chains across the membrane. This chain is Protein translocase subunit SecA 2, found in Staphylococcus epidermidis (strain ATCC 35984 / DSM 28319 / BCRC 17069 / CCUG 31568 / BM 3577 / RP62A).